Reading from the N-terminus, the 746-residue chain is 4-hydroxy-3-methylbut-2-en-1-yl diphosphate synthase (flavodoxin) (746 aa).

[4Fe-4S] cluster is bound by residues Cys-653, Cys-656, Cys-687, and Glu-694.

The protein belongs to the IspG family. It depends on [4Fe-4S] cluster as a cofactor.

It catalyses the reaction (2E)-4-hydroxy-3-methylbut-2-enyl diphosphate + oxidized [flavodoxin] + H2O + 2 H(+) = 2-C-methyl-D-erythritol 2,4-cyclic diphosphate + reduced [flavodoxin]. Its pathway is isoprenoid biosynthesis; isopentenyl diphosphate biosynthesis via DXP pathway; isopentenyl diphosphate from 1-deoxy-D-xylulose 5-phosphate: step 5/6. In terms of biological role, converts 2C-methyl-D-erythritol 2,4-cyclodiphosphate (ME-2,4cPP) into 1-hydroxy-2-methyl-2-(E)-butenyl 4-diphosphate. The chain is 4-hydroxy-3-methylbut-2-en-1-yl diphosphate synthase (flavodoxin) from Chlorobaculum tepidum (strain ATCC 49652 / DSM 12025 / NBRC 103806 / TLS) (Chlorobium tepidum).